The following is a 155-amino-acid chain: MNYLQYYPTDVINGEGTRCTLFVSGCTHACKGCYNQKSWSFSAGVLFDDVMEQQIINDLKDTRIKRQGLTLSGGDPLHPLNVETLLPFVQRVKRECPDKDIWVWTGYKLDELDKQQRAMLPYIDVLIDGKFIQEQADPSLVWRGSANQIIHRFKL.

[4Fe-4S] cluster contacts are provided by Cys26, Cys30, and Cys33. Residues 32–34 (GCY) and Gly74 contribute to the S-adenosyl-L-methionine site.

This sequence belongs to the organic radical-activating enzymes family. Forms a tetramer composed of two NrdD and two NrdG subunits. The cofactor is [4Fe-4S] cluster.

The protein resides in the cytoplasm. It catalyses the reaction glycyl-[protein] + reduced [flavodoxin] + S-adenosyl-L-methionine = glycin-2-yl radical-[protein] + semiquinone [flavodoxin] + 5'-deoxyadenosine + L-methionine + H(+). In terms of biological role, activation of anaerobic ribonucleoside-triphosphate reductase under anaerobic conditions by generation of an organic free radical, using S-adenosylmethionine and reduced flavodoxin as cosubstrates to produce 5'-deoxy-adenosine. This Haemophilus influenzae (strain ATCC 51907 / DSM 11121 / KW20 / Rd) protein is Anaerobic ribonucleoside-triphosphate reductase-activating protein (nrdG).